The sequence spans 648 residues: Threonine--tRNA ligase (648 aa).

In terms of domain architecture, TGS spans 1 to 61 (MINITFPDGA…DTDGSIEIVT (61 aa)). Residues 242-540 (DHRKLGKELD…LIETYKGAFP (299 aa)) form a catalytic region. Zn(2+) is bound by residues C336, H387, and H517.

This sequence belongs to the class-II aminoacyl-tRNA synthetase family. Homodimer. The cofactor is Zn(2+).

The protein localises to the cytoplasm. The enzyme catalyses tRNA(Thr) + L-threonine + ATP = L-threonyl-tRNA(Thr) + AMP + diphosphate + H(+). Its function is as follows. Catalyzes the attachment of threonine to tRNA(Thr) in a two-step reaction: L-threonine is first activated by ATP to form Thr-AMP and then transferred to the acceptor end of tRNA(Thr). Also edits incorrectly charged L-seryl-tRNA(Thr). This Streptococcus uberis (strain ATCC BAA-854 / 0140J) protein is Threonine--tRNA ligase.